The following is a 1094-amino-acid chain: DNA polymerase delta catalytic subunit (1094 aa).

Cys1003, Cys1006, Cys1016, and Cys1019 together coordinate Zn(2+). Residues 1003 to 1019 (CIGCNSSIKKPPLCNHC) form a CysA-type zinc finger. Positions 1049, 1052, 1062, and 1067 each coordinate [4Fe-4S] cluster. The CysB motif motif lies at 1049–1067 (CQRCQGNLHVDVICMNRDC).

This sequence belongs to the DNA polymerase type-B family. In terms of assembly, heterodimer composed of a catalytic subunit POLD and a small regulatory subunit. It depends on [4Fe-4S] cluster as a cofactor. Mg(2+) is required as a cofactor.

It localises to the nucleus. It carries out the reaction DNA(n) + a 2'-deoxyribonucleoside 5'-triphosphate = DNA(n+1) + diphosphate. With respect to regulation, the small regulatory subunit delta and PCNA1 increase POLD catalytic activity. Its function is as follows. This polymerase possesses two enzymatic activities: DNA synthesis (polymerase) and an exonucleolytic activity that degrades single-stranded DNA in the 3'- to 5'-direction. In Plasmodium falciparum (isolate K1 / Thailand), this protein is DNA polymerase delta catalytic subunit (POLD).